The following is a 2183-amino-acid chain: Genome polyprotein (2183 aa).

Gly2 is lipidated: N-myristoyl glycine; by host. Residues 2-1493 (GAQVSTQKTG…HVSRAFICLQ (1492 aa)) are Cytoplasmic-facing. The interval 566 to 582 (FYQGPTEESVERAMGRV) is amphipathic alpha-helix. Active-site for protease 2A activity residues include His870 and Asp888. Residues Cys905 and Cys907 each coordinate Zn(2+). The active-site For protease 2A activity is Cys959. Residues Cys965 and His967 each contribute to the Zn(2+) site. The tract at residues 1099 to 1171 (NNNWLKKFTE…EQSAPSQSDQ (73 aa)) is membrane-binding. Residues 1099–1237 (NNNWLKKFTE…SPGAGKSVAT (139 aa)) are oligomerization. The RNA-binding stretch occupies residues 1120 to 1124 (AVKIQ). One can recognise an SF3 helicase domain in the interval 1203-1359 (EKKMSNYIQF…SMYSQNGKIN (157 aa)). Residues Cys1367, Cys1379, and Cys1384 each contribute to the Zn(2+) site. The C4-type; degenerate zinc finger occupies 1367–1384 (CDEECCPVNFKKCCPLVC). The tract at residues 1411–1418 (EYNHRHSV) is RNA-binding. An oligomerization region spans residues 1422 to 1427 (LEALFQ). An intramembrane segment occupies 1494–1509 (ALTTFVSVAGIIYIIY). Topologically, residues 1510 to 2183 (KLFAGFQGAY…TLRRKWLDAF (674 aa)) are cytoplasmic. O-(5'-phospho-RNA)-tyrosine is present on Tyr1519. The Peptidase C3 domain occupies 1539-1717 (GPAFEFAVAM…FSASLLRHYF (179 aa)). Catalysis depends on for protease 3C activity residues His1578, Glu1609, and Cys1685. The region spanning 1948–2064 (GHLRAFDYSG…SYPLPIDASL (117 aa)) is the RdRp catalytic domain. Residues Asp1954 and Asp2050 each coordinate Mg(2+).

This sequence belongs to the picornaviruses polyprotein family. In terms of assembly, interacts with capsid protein VP1 and capsid protein VP3 to form heterotrimeric protomers. Interacts with capsid protein VP0, and capsid protein VP3 to form heterotrimeric protomers. Five protomers subsequently associate to form pentamers which serve as building blocks for the capsid. Interacts with capsid protein VP2, capsid protein VP3 and capsid protein VP4 following cleavage of capsid protein VP0. Interacts with host CXADR. As to quaternary structure, interacts with capsid protein VP1 and capsid protein VP3 in the mature capsid. In terms of assembly, interacts with capsid protein VP0 and capsid protein VP1 to form heterotrimeric protomers. Five protomers subsequently associate to form pentamers which serve as building blocks for the capsid. Interacts with capsid protein VP4 in the mature capsid. Interacts with protein 2C; this interaction may be important for virion morphogenesis. Interacts with capsid protein VP1 and capsid protein VP3. As to quaternary structure, homodimer. In terms of assembly, homohexamer; forms a hexameric ring structure with 6-fold symmetry characteristic of AAA+ ATPases. Interacts (via N-terminus) with host RTN3 (via reticulon domain); this interaction is important for viral replication. Interacts with capsid protein VP3; this interaction may be important for virion morphogenesis. Interacts with protein 3CD. As to quaternary structure, homodimer. Interacts with host GBF1. Interacts (via GOLD domain) with host ACBD3 (via GOLD domain); this interaction allows the formation of a viral protein 3A/ACBD3 heterotetramer with a 2:2 stoichiometry, which will stimulate the recruitment of host PI4KB in order to synthesize PI4P at the viral RNA replication sites. In terms of assembly, interacts with RNA-directed RNA polymerase. Interacts with protein 3AB and with RNA-directed RNA polymerase. As to quaternary structure, interacts with Viral protein genome-linked and with protein 3CD. It depends on Mg(2+) as a cofactor. Post-translationally, specific enzymatic cleavages in vivo by the viral proteases yield processing intermediates and the mature proteins. Myristoylation is required for the formation of pentamers during virus assembly. Further assembly of 12 pentamers and a molecule of genomic RNA generates the provirion. In terms of processing, during virion maturation, immature virions are rendered infectious following cleavage of VP0 into VP4 and VP2. This maturation seems to be an autocatalytic event triggered by the presence of RNA in the capsid and it is followed by a conformational change infectious virion. Post-translationally, myristoylation is required during RNA encapsidation and formation of the mature virus particle. VPg is uridylylated by the polymerase into VPg-pUpU. This acts as a nucleotide-peptide primer for the genomic RNA replication.

The protein resides in the virion. The protein localises to the host cytoplasm. Its subcellular location is the host cytoplasmic vesicle membrane. It localises to the host nucleus. The catalysed reaction is a ribonucleoside 5'-triphosphate + H2O = a ribonucleoside 5'-diphosphate + phosphate + H(+). It catalyses the reaction Selective cleavage of Tyr-|-Gly bond in the picornavirus polyprotein.. The enzyme catalyses RNA(n) + a ribonucleoside 5'-triphosphate = RNA(n+1) + diphosphate. It carries out the reaction Selective cleavage of Gln-|-Gly bond in the poliovirus polyprotein. In other picornavirus reactions Glu may be substituted for Gln, and Ser or Thr for Gly.. With respect to regulation, replication or transcription is subject to high level of random mutations by the nucleotide analog ribavirin. Functionally, forms an icosahedral capsid of pseudo T=3 symmetry with capsid proteins VP2 and VP3. The capsid is 300 Angstroms in diameter, composed of 60 copies of each capsid protein and enclosing the viral positive strand RNA genome. Capsid protein VP1 mainly forms the vertices of the capsid. Capsid protein VP1 interacts with host CXADR to provide virion attachment to target host cells. This attachment induces virion internalization. Tyrosine kinases are probably involved in the entry process. After binding to its receptor, the capsid undergoes conformational changes. Capsid protein VP1 N-terminus (that contains an amphipathic alpha-helix) and capsid protein VP4 are externalized. Together, they shape a pore in the host membrane through which viral genome is translocated to host cell cytoplasm. In terms of biological role, forms an icosahedral capsid of pseudo T=3 symmetry with capsid proteins VP2 and VP3. The capsid is 300 Angstroms in diameter, composed of 60 copies of each capsid protein and enclosing the viral positive strand RNA genome. Its function is as follows. Lies on the inner surface of the capsid shell. After binding to the host receptor, the capsid undergoes conformational changes. Capsid protein VP4 is released, Capsid protein VP1 N-terminus is externalized, and together, they shape a pore in the host membrane through which the viral genome is translocated into the host cell cytoplasm. Component of immature procapsids, which is cleaved into capsid proteins VP4 and VP2 after maturation. Allows the capsid to remain inactive before the maturation step. Functionally, cysteine protease that cleaves viral polyprotein and specific host proteins. It is responsible for the autocatalytic cleavage between the P1 and P2 regions, which is the first cleavage occurring in the polyprotein. Also cleaves the host translation initiation factor EIF4G1, in order to shut down the capped cellular mRNA translation. Inhibits the host nucleus-cytoplasm protein and RNA trafficking by cleaving host members of the nuclear pores. Counteracts stress granule formation probably by antagonizing its assembly or promoting its dissassembly. Cleaves and inhibits host IFIH1/MDA5, thereby inhibiting the type-I IFN production and the establishment of the antiviral state. Cleaves and inhibits host MAVS, thereby inhibiting the type-I IFN production and the establishment of the antiviral state. In terms of biological role, plays an essential role in the virus replication cycle by acting as a viroporin. Creates a pore in the host endoplasmic reticulum and as a consequence releases Ca2+ in the cytoplasm of infected cell. In turn, high levels of cytoplasmic calcium may trigger membrane trafficking and transport of viral ER-associated proteins to viroplasms, sites of viral genome replication. Its function is as follows. Induces and associates with structural rearrangements of intracellular membranes. Displays RNA-binding, nucleotide binding and NTPase activities. May play a role in virion morphogenesis and viral RNA encapsidation by interacting with the capsid protein VP3. Localizes the viral replication complex to the surface of membranous vesicles. Together with protein 3CD binds the Cis-Active RNA Element (CRE) which is involved in RNA synthesis initiation. Acts as a cofactor to stimulate the activity of 3D polymerase, maybe through a nucleid acid chaperone activity. Functionally, localizes the viral replication complex to the surface of membranous vesicles. It inhibits host cell endoplasmic reticulum-to-Golgi apparatus transport and causes the disassembly of the Golgi complex, possibly through GBF1 interaction. This would result in depletion of MHC, trail receptors and IFN receptors at the host cell surface. Plays an essential role in viral RNA replication by recruiting ACBD3 and PI4KB at the viral replication sites, thereby allowing the formation of the rearranged membranous structures where viral replication takes place. In terms of biological role, acts as a primer for viral RNA replication and remains covalently bound to viral genomic RNA. VPg is uridylylated prior to priming replication into VPg-pUpU. The oriI viral genomic sequence may act as a template for this. The VPg-pUpU is then used as primer on the genomic RNA poly(A) by the RNA-dependent RNA polymerase to replicate the viral genome. During genome replication, the VPg-RNA linkage is removed by the host TDP2, thereby accelerating replication. During the late stage of the replication cycle, host TDP2 is excluded from sites of viral RNA synthesis and encapsidation, allowing for the generation of progeny virions. Its function is as follows. Involved in the viral replication complex and viral polypeptide maturation. It exhibits protease activity with a specificity and catalytic efficiency that is different from protease 3C. Protein 3CD lacks polymerase activity. Protein 3CD binds to the 5'UTR of the viral genome. Replicates the viral genomic RNA on the surface of intracellular membranes. May form linear arrays of subunits that propagate along a strong head-to-tail interaction called interface-I. Covalently attaches UMP to a tyrosine of VPg, which is used to prime RNA synthesis. The positive stranded RNA genome is first replicated at virus induced membranous vesicles, creating a dsRNA genomic replication form. This dsRNA is then used as template to synthesize positive stranded RNA genomes. ss(+)RNA genomes are either translated, replicated or encapsidated. Functionally, major viral protease that mediates proteolytic processing of the polyprotein. Cleaves host EIF5B, contributing to host translation shutoff. Also cleaves host PABPC1, contributing to host translation shutoff. Cleaves host NLRP1, triggers host N-glycine-mediated degradation of the autoinhibitory NLRP1 N-terminal fragment. This is Genome polyprotein from Coxsackievirus B4 (strain E2).